Reading from the N-terminus, the 86-residue chain is Gas vesicle protein A1 (86 aa).

The protein belongs to the gas vesicle GvpA family. The gas vesicle shell is 2 nm thick and consists of a single layer of this protein. It forms helical ribs nearly perpendicular to the long axis of the vesicle.

It localises to the gas vesicle shell. Its function is as follows. Gas vesicles are hollow, gas filled proteinaceous nanostructures found in some microorganisms. During planktonic growth they allow positioning of the organism at a favorable depth for light or nutrient acquisition. GvpA forms the protein shell. Functionally, it is not clear if the 2 type A proteins in this organism are functionally redundant. In terms of biological role, when the full gvp locus (gvpA1-gvpP-gvpQ-gvpA2-gvpR-gvpN-gvpF-gvpG-gvpL-gvpS-gvpK-gvpJ-gvpT-gvpU, called pNL26) is expressed in E.coli gas vesicles are made. This Priestia megaterium (Bacillus megaterium) protein is Gas vesicle protein A1.